The primary structure comprises 577 residues: Steryl-sulfatase (577 aa).

The signal sequence occupies residues 1 to 19; it reads MLWPCLLALLLSQLNFLCA. The Lumenal portion of the chain corresponds to 21-183; that stretch reads RPGPGPNFLL…GTVFGSAQQV (163 aa). Residues D34 and D35 each contribute to the Ca(2+) site. An N-linked (GlcNAc...) asparagine glycan is attached at N46. Residue C74 coordinates Ca(2+). C74 acts as the Nucleophile in catalysis. At C74 the chain carries 3-oxoalanine (Cys). The active site involves H135. 2 disulfide bridges follow: C140–C147 and C169–C241. A helical membrane pass occupies residues 184 to 207; it reads FVVLPMNILGAVLLAMALARWAGL. At 208–211 the chain is on the cytoplasmic side; the sequence is ARPP. A helical transmembrane segment spans residues 212-233; that stretch reads GWVFGVTVAAMAAVGGAYVAFL. Over 234–577 the chain is Lumenal; it reads YHFRPANCFL…PLACRCAGDG (344 aa). N332 is a glycosylation site (N-linked (GlcNAc...) asparagine). D341 and H342 together coordinate Ca(2+). Disulfide bonds link C445–C488, C480–C486, and C561–C571. A glycan (N-linked (GlcNAc...) asparagine) is linked at N458.

This sequence belongs to the sulfatase family. In terms of assembly, homodimer. Requires Ca(2+) as cofactor. Post-translationally, the conversion to 3-oxoalanine (also known as C-formylglycine, FGly), of a serine or cysteine residue in prokaryotes and of a cysteine residue in eukaryotes, is critical for catalytic activity.

The protein localises to the microsome membrane. It is found in the endoplasmic reticulum membrane. The enzyme catalyses dehydroepiandrosterone 3-sulfate + H2O = 3beta-hydroxyandrost-5-en-17-one + sulfate + H(+). It catalyses the reaction estrone 3-sulfate + H2O = estrone + sulfate + H(+). Functionally, catalyzes the conversion of sulfated steroid precursors, such as dehydroepiandrosterone sulfate (DHEA-S) and estrone sulfate to the free steroid. In Rattus norvegicus (Rat), this protein is Steryl-sulfatase (Sts).